The chain runs to 636 residues: Protein BCAP (636 aa).

Coiled coils occupy residues 36–97 (LSCL…EQKE), 141–220 (ESEN…WNLQ), 249–325 (YKQR…HGKN), 377–484 (ISSE…ECQE), and 519–631 (LEEE…KMNS).

The protein belongs to the ODF2 family. In terms of tissue distribution, mainly expressed in trachea and testis. Not detected in bone marrow, bladder, leukocytes. Only weakly detected in tongue, stomach, brain and ovaries.

Its subcellular location is the cytoplasm. The protein resides in the cytoskeleton. It localises to the microtubule organizing center. It is found in the centrosome. The protein localises to the centriole. Its subcellular location is the centriolar satellite. The protein resides in the cilium basal body. In terms of biological role, acts as a suppressor of ciliogenesis, specifically, the initiation of ciliogenesis. In Homo sapiens (Human), this protein is Protein BCAP.